The chain runs to 347 residues: Anthranilate phosphoribosyltransferase (347 aa).

5-phospho-alpha-D-ribose 1-diphosphate-binding positions include Gly-88, Gly-91–Asp-92, Thr-96, Asn-98–Thr-101, Lys-116–Ser-124, and Ser-128. Position 88 (Gly-88) interacts with anthranilate. A Mg(2+)-binding site is contributed by Ser-100. Arg-174 lines the anthranilate pocket. The Mg(2+) site is built by Asp-233 and Glu-234.

It belongs to the anthranilate phosphoribosyltransferase family. In terms of assembly, homodimer. Mg(2+) serves as cofactor.

The enzyme catalyses N-(5-phospho-beta-D-ribosyl)anthranilate + diphosphate = 5-phospho-alpha-D-ribose 1-diphosphate + anthranilate. It functions in the pathway amino-acid biosynthesis; L-tryptophan biosynthesis; L-tryptophan from chorismate: step 2/5. Its function is as follows. Catalyzes the transfer of the phosphoribosyl group of 5-phosphorylribose-1-pyrophosphate (PRPP) to anthranilate to yield N-(5'-phosphoribosyl)-anthranilate (PRA). This is Anthranilate phosphoribosyltransferase from Polaromonas sp. (strain JS666 / ATCC BAA-500).